The chain runs to 232 residues: Large ribosomal subunit protein uL1 (232 aa).

This sequence belongs to the universal ribosomal protein uL1 family. As to quaternary structure, part of the 50S ribosomal subunit.

Functionally, binds directly to 23S rRNA. The L1 stalk is quite mobile in the ribosome, and is involved in E site tRNA release. Protein L1 is also a translational repressor protein, it controls the translation of the L11 operon by binding to its mRNA. In Levilactobacillus brevis (strain ATCC 367 / BCRC 12310 / CIP 105137 / JCM 1170 / LMG 11437 / NCIMB 947 / NCTC 947) (Lactobacillus brevis), this protein is Large ribosomal subunit protein uL1.